Here is a 127-residue protein sequence, read N- to C-terminus: LIM domain-containing protein 2 (127 aa).

N-acetylmethionine is present on Met1. The interval 1-24 (MFQAAGAAQATPSHDAKGGGSSTV) is disordered. Positions 38–98 (ETCAACQKTV…KPHFQQLFKS (61 aa)) constitute an LIM zinc-binding domain. 8 residues coordinate Zn(2+): Cys40, Cys43, His61, Cys64, Cys67, Cys70, Cys88, and His91.

As to quaternary structure, interacts with ILK.

The protein resides in the cytoplasm. Its subcellular location is the nucleus. Acts as an activator of the protein-kinase ILK, thereby regulating cell motility. The polypeptide is LIM domain-containing protein 2 (Homo sapiens (Human)).